The sequence spans 193 residues: Holliday junction branch migration complex subunit RuvA (193 aa).

A domain I region spans residues 1–64 (MITSLTGTIL…EDAHLLYGFM (64 aa)). Positions 65–139 (TVAERDMFRL…DKMGGIAPGP (75 aa)) are domain II. The interval 139 to 143 (PMGRG) is flexible linker. The interval 144-193 (GAGDPRQEAIAALLTLGYKPAQASQAIAGLADGLGLEDLIRQSLQNLSRH) is domain III.

The protein belongs to the RuvA family. As to quaternary structure, homotetramer. Forms an RuvA(8)-RuvB(12)-Holliday junction (HJ) complex. HJ DNA is sandwiched between 2 RuvA tetramers; dsDNA enters through RuvA and exits via RuvB. An RuvB hexamer assembles on each DNA strand where it exits the tetramer. Each RuvB hexamer is contacted by two RuvA subunits (via domain III) on 2 adjacent RuvB subunits; this complex drives branch migration. In the full resolvosome a probable DNA-RuvA(4)-RuvB(12)-RuvC(2) complex forms which resolves the HJ.

It localises to the cytoplasm. Functionally, the RuvA-RuvB-RuvC complex processes Holliday junction (HJ) DNA during genetic recombination and DNA repair, while the RuvA-RuvB complex plays an important role in the rescue of blocked DNA replication forks via replication fork reversal (RFR). RuvA specifically binds to HJ cruciform DNA, conferring on it an open structure. The RuvB hexamer acts as an ATP-dependent pump, pulling dsDNA into and through the RuvAB complex. HJ branch migration allows RuvC to scan DNA until it finds its consensus sequence, where it cleaves and resolves the cruciform DNA. The chain is Holliday junction branch migration complex subunit RuvA from Acidithiobacillus ferrooxidans (strain ATCC 53993 / BNL-5-31) (Leptospirillum ferrooxidans (ATCC 53993)).